Reading from the N-terminus, the 100-residue chain is Urease subunit gamma (100 aa).

It belongs to the urease gamma subunit family. In terms of assembly, heterotrimer of UreA (gamma), UreB (beta) and UreC (alpha) subunits. Three heterotrimers associate to form the active enzyme.

Its subcellular location is the cytoplasm. The enzyme catalyses urea + 2 H2O + H(+) = hydrogencarbonate + 2 NH4(+). The protein operates within nitrogen metabolism; urea degradation; CO(2) and NH(3) from urea (urease route): step 1/1. This Kocuria rhizophila (strain ATCC 9341 / DSM 348 / NBRC 103217 / DC2201) protein is Urease subunit gamma.